The following is a 176-amino-acid chain: Large ribosomal subunit protein uL6 (176 aa).

A compositionally biased stretch (basic and acidic residues) spans 156–170; that stretch reads YKGKGVRYADEQVRR. The tract at residues 156–176 is disordered; it reads YKGKGVRYADEQVRRKEAKKK.

It belongs to the universal ribosomal protein uL6 family. In terms of assembly, part of the 50S ribosomal subunit.

Its function is as follows. This protein binds to the 23S rRNA, and is important in its secondary structure. It is located near the subunit interface in the base of the L7/L12 stalk, and near the tRNA binding site of the peptidyltransferase center. In Shewanella woodyi (strain ATCC 51908 / MS32), this protein is Large ribosomal subunit protein uL6.